A 119-amino-acid polypeptide reads, in one-letter code: Large ribosomal subunit protein bL20 (119 aa).

It belongs to the bacterial ribosomal protein bL20 family.

Binds directly to 23S ribosomal RNA and is necessary for the in vitro assembly process of the 50S ribosomal subunit. It is not involved in the protein synthesizing functions of that subunit. The sequence is that of Large ribosomal subunit protein bL20 from Xanthomonas oryzae pv. oryzae (strain KACC10331 / KXO85).